The sequence spans 336 residues: E3 ubiquitin-protein ligase RING2 (336 aa).

S2 is modified (N-acetylserine). The tract at residues 2-179 is interaction with HIP2; the sequence is SQAVQTNGTQ…AEDNGDSSHC (178 aa). At S41 the chain carries Phosphoserine. The segment at 51–91 adopts an RING-type zinc-finger fold; it reads CPICLDMLKNTMTTKECLHRFCADCIITALRSGNKECPTCR. The interval 93–98 is interaction with nucleosomes via an acidic patch on histone H2A and histone H2B; the sequence is KLVSKR. K112 participates in a covalent cross-link: Glycyl lysine isopeptide (Lys-Gly) (interchain with G-Cter in ubiquitin). Phosphoserine is present on residues S143 and S168. The interval 157-213 is disordered; sequence QRGKKQQIENGSGAEDNGDSSHCSNASTHSNQEAGPSNKRTKTSDDSGLEPDNNNAA. The span at 176 to 191 shows a compositional bias: polar residues; that stretch reads SSHCSNASTHSNQEAG. Residues K249 and K323 each participate in a glycyl lysine isopeptide (Lys-Gly) (interchain with G-Cter in SUMO2) cross-link.

Component of chromatin-associated Polycomb (PcG) complexes. Component of a number of PRC1-like complexes; these complexes contain either the polycomb group ring finger protein PCGF1, or PCGF2, or PCGF3, or BMI1, or PCGF5, or PCGF6. Distinct PRC1-like complexes are composed of a RING1 subunit (RING1B or RING1A), one of the six PCGF proteins (PCGF1, PCGF2, PCGF3, BMI1, PCGF5 or PCGF6), one PHC protein (PHC1, PHC2 or PHC3) and one of the CBX proteins (CBX2, CBX4, CBX6, CBX7 or CBX8). Part of a complex that contains RNF2, UB2D3 and BMI1; within that complex RNF2 and BMI1 form a tight heterodimer, where UB2D3 interacts only with RNF2. The complex composed of RNF2, UB2D3 and BMI1 binds nucleosomes, and has activity only with nucleosomal histone H2A. Part of a complex that contains PCGF5, RNF2 and UBE2D3. Part of a complex that contains AUTS2, PCGF5, RNF2, CSNK2B and RYBP. Interacts with CBX6 and CBX8. Interacts with PHC1, PCGF2, RYBP, CBX7, CBX4, CBX2, RNF1/RING1, BMI1 and PHC2. Interaction with RYBP and CBX7 is mutually exclusive; both compete for the same binding site on RNF2. Component of repressive BCOR complex containing a Polycomb group subcomplex at least composed of RYBP, PCGF1, BCOR and RING1. Interacts with CBX2 and PHC1. Interacts with CHTOP. Interacts with AURKB. Part of the E2F6.com-1 complex in G0 phase composed of E2F6, MGA, MAX, TFDP1, CBX3, BAT8, EUHMTASE1, RNF1/RING1, RNF2/RING2, MBLR, L3MBTL2 and YAF2. Component of some MLL1/MLL complex, at least composed of the core components KMT2A/MLL1, ASH2L, HCFC1/HCF1, WDR5 and RBBP5, as well as the facultative components BACC1, CHD8, E2F6, HSP70, INO80C, KANSL1, LAS1L, MAX, MCRS1, MGA, MYST1/MOF, PELP1, PHF20, PRP31, RING2, RUVB1/TIP49A, RUVB2/TIP49B, SENP3, TAF1, TAF4, TAF6, TAF7, TAF9 and TEX10. Interacts with RYBP, HIP2 and TFCP2. Interacts with NUPR1. Interacts with SAMD7 in a PHC2-dependent manner. Post-translationally, monoubiquitinated, by auto-ubiquitination. Polyubiquitinated in the presence of UBE2D3 (in vitro).

It localises to the nucleus. The protein localises to the cytoplasm. The protein resides in the chromosome. It carries out the reaction S-ubiquitinyl-[E2 ubiquitin-conjugating enzyme]-L-cysteine + [acceptor protein]-L-lysine = [E2 ubiquitin-conjugating enzyme]-L-cysteine + N(6)-ubiquitinyl-[acceptor protein]-L-lysine.. Its pathway is protein modification; protein ubiquitination. Functionally, E3 ubiquitin-protein ligase that mediates monoubiquitination of 'Lys-119' of histone H2A (H2AK119Ub), thereby playing a central role in histone code and gene regulation. H2AK119Ub gives a specific tag for epigenetic transcriptional repression and participates in X chromosome inactivation of female mammals. May be involved in the initiation of both imprinted and random X inactivation. Essential component of a Polycomb group (PcG) multiprotein PRC1-like complex, a complex class required to maintain the transcriptionally repressive state of many genes, including Hox genes, throughout development. PcG PRC1 complex acts via chromatin remodeling and modification of histones, rendering chromatin heritably changed in its expressibility. E3 ubiquitin-protein ligase activity is enhanced by BMI1/PCGF4. Acts as the main E3 ubiquitin ligase on histone H2A of the PRC1 complex, while RING1 may rather act as a modulator of RNF2/RING2 activity. Plays a role in the transcriptional repression of genes that are required for pluripotency in embryonic stem cells, thereby contributing to differentiation of the ectodermal and endodermal germ layers. Association with the chromosomal DNA is cell-cycle dependent. In resting B- and T-lymphocytes, interaction with AURKB leads to block its activity, thereby maintaining transcription in resting lymphocytes. Also acts as a negative regulator of autophagy by mediating ubiquitination of AMBRA1, leading to its subsequent degradation. The protein is E3 ubiquitin-protein ligase RING2 (RNF2) of Pongo abelii (Sumatran orangutan).